A 184-amino-acid chain; its full sequence is ATP synthase subunit b, chloroplastic (184 aa).

The helical transmembrane segment at 27-49 (LATNPINLSVVLGVLIFFGKGVL) threads the bilayer.

It belongs to the ATPase B chain family. In terms of assembly, F-type ATPases have 2 components, F(1) - the catalytic core - and F(0) - the membrane proton channel. F(1) has five subunits: alpha(3), beta(3), gamma(1), delta(1), epsilon(1). F(0) has four main subunits: a(1), b(1), b'(1) and c(10-14). The alpha and beta chains form an alternating ring which encloses part of the gamma chain. F(1) is attached to F(0) by a central stalk formed by the gamma and epsilon chains, while a peripheral stalk is formed by the delta, b and b' chains.

The protein resides in the plastid. The protein localises to the chloroplast thylakoid membrane. Functionally, f(1)F(0) ATP synthase produces ATP from ADP in the presence of a proton or sodium gradient. F-type ATPases consist of two structural domains, F(1) containing the extramembraneous catalytic core and F(0) containing the membrane proton channel, linked together by a central stalk and a peripheral stalk. During catalysis, ATP synthesis in the catalytic domain of F(1) is coupled via a rotary mechanism of the central stalk subunits to proton translocation. In terms of biological role, component of the F(0) channel, it forms part of the peripheral stalk, linking F(1) to F(0). This chain is ATP synthase subunit b, chloroplastic, found in Oenothera elata subsp. hookeri (Hooker's evening primrose).